The chain runs to 510 residues: Cytochrome P450 monooxygenase penQ (510 aa).

A helical transmembrane segment spans residues 9-26 (WIVTLIVAATTYCTLRWV). 2 N-linked (GlcNAc...) asparagine glycosylation sites follow: N148 and N341. C448 lines the heme pocket. N482 carries N-linked (GlcNAc...) asparagine glycosylation.

The protein belongs to the cytochrome P450 family. Requires heme as cofactor.

The protein resides in the membrane. Its pathway is secondary metabolite biosynthesis. Its function is as follows. Cytochrome P450 monooxygenase; part of the gene cluster that mediates the biosynthesis of the indole diterpenes penitrems. The geranylgeranyl diphosphate (GGPP) synthase penG catalyzes the first step in penitrem biosynthesis via conversion of farnesyl pyrophosphate and isopentyl pyrophosphate into geranylgeranyl pyrophosphate (GGPP). Condensation of indole-3-glycerol phosphate with GGPP by the prenyl transferase penC then forms 3-geranylgeranylindole (3-GGI). Epoxidation by the FAD-dependent monooxygenase penM leads to a epoxidized-GGI that is substrate of the terpene cyclase penB for cyclization to yield paspaline. Paspaline is subsequently converted to 13-desoxypaxilline by the cytochrome P450 monooxygenase penP, the latter being then converted to paxilline by the cytochrome P450 monooxygenase penQ. Paxilline is converted to beta-paxitriol via C-10 ketoreduction by the short-chain dehydrogenase PC-15 which can be monoprenylated at the C-20 by the indole diterpene prenyltransferase penD. A two-step elimination (acetylation and elimination) process performed by the O-acetyltransferase PC-16 and the P.simplicissimum ptmI-ortholog not yet identified in P.crustosum, leads to the production of the prenylated form of penijanthine. The FAD-linked oxidoreductase ptmO then converts the prenylated form of penijanthine into PC-M5 which is in turn transformed into PC-M4 by the aromatic dimethylallyltransferase PC-22. A series of oxidation steps involving 4 cytochrome P450 monooxygenases (PC-21, PC-05, PC-23, PC-20) and a FAD-dependent monooxygenase (PC-14) are required for the transformation of PC-M4 to penitrems A and E. Synthesis of these final products is proposed to proceed via penitrems D and C (PC-21, PC-05, PC-14) and penitrems B and F (PC-21, PC-05, PC-14, PC-23). The sequence is that of Cytochrome P450 monooxygenase penQ from Penicillium crustosum (Blue mold fungus).